The following is a 465-amino-acid chain: Cysteine--tRNA ligase (465 aa).

Cys30 is a Zn(2+) binding site. Residues 32–42 (ITVYDYCHVGH) carry the 'HIGH' region motif. Zn(2+)-binding residues include Cys214, His239, and Glu243. Positions 271 to 275 (KMSKS) match the 'KMSKS' region motif. Position 274 (Lys274) interacts with ATP.

This sequence belongs to the class-I aminoacyl-tRNA synthetase family. In terms of assembly, monomer. Zn(2+) is required as a cofactor.

The protein localises to the cytoplasm. The enzyme catalyses tRNA(Cys) + L-cysteine + ATP = L-cysteinyl-tRNA(Cys) + AMP + diphosphate. In Burkholderia cenocepacia (strain HI2424), this protein is Cysteine--tRNA ligase.